The chain runs to 319 residues: Carboxylesterase NlhH (319 aa).

Residues 88–90 (HGG) carry the Involved in the stabilization of the negatively charged intermediate by the formation of the oxyanion hole motif. Catalysis depends on residues S162, D260, and H290.

Belongs to the 'GDXG' lipolytic enzyme family. In terms of assembly, monomer.

It carries out the reaction a carboxylic ester + H2O = an alcohol + a carboxylate + H(+). Its function is as follows. Hydrolyzes various short-chain esters. This is Carboxylesterase NlhH (nlhH) from Mycobacterium tuberculosis (strain CDC 1551 / Oshkosh).